A 357-amino-acid chain; its full sequence is Quinolinate synthase (357 aa).

Histidine 50 and serine 71 together coordinate iminosuccinate. Cysteine 116 serves as a coordination point for [4Fe-4S] cluster. Iminosuccinate contacts are provided by residues 142–144 (YAN) and serine 159. Cysteine 203 lines the [4Fe-4S] cluster pocket. Iminosuccinate-binding positions include 229 to 231 (HPE) and threonine 246. Position 300 (cysteine 300) interacts with [4Fe-4S] cluster.

The protein belongs to the quinolinate synthase family. Type 1 subfamily. [4Fe-4S] cluster serves as cofactor.

The protein localises to the cytoplasm. The enzyme catalyses iminosuccinate + dihydroxyacetone phosphate = quinolinate + phosphate + 2 H2O + H(+). It participates in cofactor biosynthesis; NAD(+) biosynthesis; quinolinate from iminoaspartate: step 1/1. Functionally, catalyzes the condensation of iminoaspartate with dihydroxyacetone phosphate to form quinolinate. The chain is Quinolinate synthase from Shewanella sp. (strain MR-4).